The primary structure comprises 160 residues: Glutathione peroxidase homolog BsaA (160 aa).

Cys-35 is an active-site residue.

This sequence belongs to the glutathione peroxidase family.

The chain is Glutathione peroxidase homolog BsaA (bsaA) from Bacillus subtilis (strain 168).